Consider the following 132-residue polypeptide: Small ribosomal subunit protein uS8c (132 aa).

It belongs to the universal ribosomal protein uS8 family. Part of the 30S ribosomal subunit.

Its subcellular location is the plastid. It localises to the chloroplast. In terms of biological role, one of the primary rRNA binding proteins, it binds directly to 16S rRNA central domain where it helps coordinate assembly of the platform of the 30S subunit. The polypeptide is Small ribosomal subunit protein uS8c (rps8) (Thalassiosira pseudonana (Marine diatom)).